The chain runs to 138 residues: Small ribosomal subunit protein uS11c (138 aa).

The disordered stretch occupies residues 1-22 (MTKPIPRIGSRRSGRIGSRKAG). The segment covering 9-22 (GSRRSGRIGSRKAG) has biased composition (basic residues).

The protein belongs to the universal ribosomal protein uS11 family. Part of the 30S ribosomal subunit.

Its subcellular location is the plastid. The protein localises to the chloroplast. This is Small ribosomal subunit protein uS11c from Piper cenocladum (Ant piper).